The chain runs to 160 residues: Transcription elongation factor GreA (160 aa).

The protein belongs to the GreA/GreB family.

Necessary for efficient RNA polymerase transcription elongation past template-encoded arresting sites. The arresting sites in DNA have the property of trapping a certain fraction of elongating RNA polymerases that pass through, resulting in locked ternary complexes. Cleavage of the nascent transcript by cleavage factors such as GreA or GreB allows the resumption of elongation from the new 3'terminus. GreA releases sequences of 2 to 3 nucleotides. This Leuconostoc citreum (strain KM20) protein is Transcription elongation factor GreA.